The following is a 490-amino-acid chain: Pup--protein ligase (490 aa).

Glu9 is a binding site for Mg(2+). Position 53 (Arg53) interacts with ATP. Mg(2+) is bound at residue Tyr55. Asp57 acts as the Proton acceptor in catalysis. Glu63 provides a ligand contact to Mg(2+). Ser66 is an ATP binding site. The tract at residues 160–181 (KTHPNGGPVPGSTDPASSTGVP) is disordered. ATP is bound at residue Trp441.

Belongs to the Pup ligase/Pup deamidase family. Pup-conjugating enzyme subfamily.

It catalyses the reaction ATP + [prokaryotic ubiquitin-like protein]-L-glutamate + [protein]-L-lysine = ADP + phosphate + N(6)-([prokaryotic ubiquitin-like protein]-gamma-L-glutamyl)-[protein]-L-lysine.. Its pathway is protein degradation; proteasomal Pup-dependent pathway. The protein operates within protein modification; protein pupylation. Catalyzes the covalent attachment of the prokaryotic ubiquitin-like protein modifier Pup to the proteasomal substrate proteins, thereby targeting them for proteasomal degradation. This tagging system is termed pupylation. The ligation reaction involves the side-chain carboxylate of the C-terminal glutamate of Pup and the side-chain amino group of a substrate lysine. This Rothia mucilaginosa (strain DY-18) (Stomatococcus mucilaginosus) protein is Pup--protein ligase.